A 233-amino-acid polypeptide reads, in one-letter code: MADS-box transcription factor 20 (233 aa).

The region spanning 1–61 (MGRGKVQVRR…GNLFHYASSH (61 aa)) is the MADS-box domain. The K-box domain maps to 91-184 (EGSMSYDHIK…PTKAAAPPAC (94 aa)).

As to expression, expressed in developing seeds and seedling shoots.

The protein localises to the nucleus. Probable transcription factor. The polypeptide is MADS-box transcription factor 20 (MADS20) (Oryza sativa subsp. japonica (Rice)).